A 414-amino-acid chain; its full sequence is Phosphoglycerate kinase (414 aa).

Residues Val23, Asp24, Phe25, Asn26, Arg39, Ser62, His63, Gly65, and Arg66 each coordinate (2R)-3-phosphoglycerate. Phosphotyrosine is present on Tyr75. Ser76 is modified (phosphoserine). Positions 121 and 122 each coordinate (2R)-3-phosphoglycerate. Ser143 is subject to Phosphoserine. His168 and Arg169 together coordinate (2R)-3-phosphoglycerate. A phosphoserine mark is found at Ser172, Ser173, and Ser183. Gly211 provides a ligand contact to ADP. Gly211 is a binding site for CDP. AMP is bound by residues Ala212 and Lys213. Ala212 provides a ligand contact to ATP. Ala212 contributes to the Mg(2+) binding site. Mg(2+)-binding residues include Ala215 and Asp216. Asp216 is a CDP binding site. An AMP-binding site is contributed by Lys217. Lys217 is a binding site for ATP. Gly235 is an ADP binding site. Gly235 is a CDP binding site. Gly236 is an AMP binding site. An ATP-binding site is contributed by Gly236. Phosphoserine is present on residues Ser253 and Ser260. Thr299 bears the Phosphothreonine mark. Gly310 is an AMP binding site. ATP is bound at residue Gly310. Ser328 is modified (phosphoserine). CDP contacts are provided by Gly335, Ala337, and Phe340. Phe340 serves as a coordination point for ADP. Residue Glu341 participates in AMP binding. Glu341 contributes to the ATP binding site. Ser351 carries the post-translational modification Phosphoserine. ATP contacts are provided by Asp372 and Thr373. Asp372 lines the Mg(2+) pocket. Residue Thr373 is modified to Phosphothreonine. Ser387, Ser390, Ser412, and Ser413 each carry phosphoserine.

It belongs to the phosphoglycerate kinase family. In terms of assembly, monomer. The cofactor is Mg(2+).

The protein localises to the cytoplasm. Its subcellular location is the mitochondrion. The catalysed reaction is (2R)-3-phosphoglycerate + ATP = (2R)-3-phospho-glyceroyl phosphate + ADP. It functions in the pathway carbohydrate degradation; glycolysis; pyruvate from D-glyceraldehyde 3-phosphate: step 2/5. In terms of biological role, catalyzes one of the two ATP producing reactions in the glycolytic pathway via the reversible conversion of 1,3-diphosphoglycerate to 3-phosphoglycerate. Both L- and D- forms of purine and pyrimidine nucleotides can be used as substrates, but the activity is much lower on pyrimidines. Negatively regulates the biosynthesis of acetyl-CoA from pyruvate in the mitochondrion. This Schizosaccharomyces pombe (strain 972 / ATCC 24843) (Fission yeast) protein is Phosphoglycerate kinase (pgk1).